Here is a 511-residue protein sequence, read N- to C-terminus: Exodeoxyribonuclease 7 large subunit (511 aa).

This sequence belongs to the XseA family. Heterooligomer composed of large and small subunits.

The protein resides in the cytoplasm. The catalysed reaction is Exonucleolytic cleavage in either 5'- to 3'- or 3'- to 5'-direction to yield nucleoside 5'-phosphates.. Its function is as follows. Bidirectionally degrades single-stranded DNA into large acid-insoluble oligonucleotides, which are then degraded further into small acid-soluble oligonucleotides. The polypeptide is Exodeoxyribonuclease 7 large subunit (Brucella melitensis biotype 1 (strain ATCC 23456 / CCUG 17765 / NCTC 10094 / 16M)).